The following is a 635-amino-acid chain: Biosynthetic arginine decarboxylase (635 aa).

Position 101 is an N6-(pyridoxal phosphate)lysine (K101). 284–294 serves as a coordination point for substrate; sequence VDVGGGLGVDY.

The protein belongs to the Orn/Lys/Arg decarboxylase class-II family. SpeA subfamily. It depends on Mg(2+) as a cofactor. Pyridoxal 5'-phosphate is required as a cofactor.

It carries out the reaction L-arginine + H(+) = agmatine + CO2. It participates in amine and polyamine biosynthesis; agmatine biosynthesis; agmatine from L-arginine: step 1/1. Functionally, catalyzes the biosynthesis of agmatine from arginine. This Tolumonas auensis (strain DSM 9187 / NBRC 110442 / TA 4) protein is Biosynthetic arginine decarboxylase.